The primary structure comprises 286 residues: 3-hydroxybutyryl-CoA dehydrogenase (286 aa).

It belongs to the 3-hydroxyacyl-CoA dehydrogenase family.

The enzyme catalyses 3-hydroxybutanoyl-CoA + NAD(+) = acetoacetyl-CoA + NADH + H(+). The catalysed reaction is (3S)-3-hydroxybutanoyl-CoA + NADP(+) = acetoacetyl-CoA + NADPH + H(+). It functions in the pathway lipid metabolism; butanoate metabolism. The polypeptide is 3-hydroxybutyryl-CoA dehydrogenase (fadB2) (Mycobacterium tuberculosis (strain CDC 1551 / Oshkosh)).